We begin with the raw amino-acid sequence, 352 residues long: Uroporphyrinogen decarboxylase (352 aa).

Substrate contacts are provided by residues 26 to 30 (RQAGR), Phe45, Asp76, Tyr153, Ser208, and His323.

The protein belongs to the uroporphyrinogen decarboxylase family. Homodimer.

The protein localises to the cytoplasm. The catalysed reaction is uroporphyrinogen III + 4 H(+) = coproporphyrinogen III + 4 CO2. It participates in porphyrin-containing compound metabolism; protoporphyrin-IX biosynthesis; coproporphyrinogen-III from 5-aminolevulinate: step 4/4. Catalyzes the decarboxylation of four acetate groups of uroporphyrinogen-III to yield coproporphyrinogen-III. This is Uroporphyrinogen decarboxylase from Prochlorococcus marinus (strain MIT 9313).